Reading from the N-terminus, the 371-residue chain is MAAAEAANCIMENFVATLANGMSLQPPLEEVSCGQAESSEKPNAEDMTSKDYYFDSYAHFGIHEEMLKDEVRTLTYRNSMFHNRHLFKDKVVLDVGSGTGILCMFAAKAGARKVIGIECSSISDYAVKIVKANKLDHVVTIIKGKVEEVELPVEKVDIIISEWMGYCLFYESMLNTVLYARDKWLAPDGLIFPDRATLYVTAIEDRQYKDYKIHWWENVYGFDMSCIKDVAIKEPLVDVVDPKQLVTNACLIKEVDIYTVKVEDLTFTSPFCLQVKRNDYVHALVAYFNIEFTRCHKRTGFSTSPESPYTHWKQTVFYMEDYLTVKTGEEIFGTIGMRPNAKNNRDLDFTIDLDFKGQLCELSCSTDYRMR.

One can recognise an SAM-dependent MTase PRMT-type domain in the interval 50 to 361 (KDYYFDSYAH…DLDFKGQLCE (312 aa)). S-adenosyl-L-methionine is bound by residues His-63, Arg-72, Gly-96, and Glu-118. Position 72 (Arg-72) interacts with S-adenosyl-L-homocysteine. An S-adenosyl-L-homocysteine-binding site is contributed by Glu-118. Lys-134 bears the N6-succinyllysine mark. A Glycyl lysine isopeptide (Lys-Gly) (interchain with G-Cter in ubiquitin) cross-link involves residue Lys-145. S-adenosyl-L-homocysteine-binding residues include Val-146 and Glu-147. S-adenosyl-L-methionine is bound at residue Glu-147. Residues Glu-162 and Glu-171 contribute to the active site. An N6-acetyllysine mark is found at Lys-228 and Lys-233. A phosphoserine mark is found at Ser-304 and Ser-307.

The protein belongs to the class I-like SAM-binding methyltransferase superfamily. Protein arginine N-methyltransferase family. As to quaternary structure, homodimer. Homooctamer; individual homodimers associates to form a homooctamer. Individual homodimers can associate to form a homohexamer. Heterodimer with PRMT8. Interacts with BTG1, BTG2, NFATC2IP and IFNAR1. Interacts with and methylates CHTOP, thereby enabling the interaction of CHTOP with the 5FMC complex. Interacts with ILF3 and SUPT5H. Interacts with and methylates FOXO1, leading to the nuclear retention of FOXO1 and the stimulation of FOXO1 transcriptional activity. Methylation of FOXO1 is increased upon oxidative stress. Interacts with and probably methylates ATXN2L. Component of the methylosome, a 20S complex containing at least CLNS1A/pICln, PRMT5/SKB1, WDR77/MEP50, PRMT1 and ERH. Interacts with DHX9 (via RGG region). Interacts (via N-terminus) with HABP4. Interacts with MAP3K5/ASK1; the interaction results in MAP3K5 methylation by PRMT1 which inhibits MAP3K5 activation. Interacts with TRIM48; the interaction results in ubiquitination of PRMT1 by TRIM48, leading to PRMT1 proteasomal degradation and activation of MAP3K5. Interacts with GATOR1 complex; this interaction is S-adenosyl-L-methionine (SAM) dependent and is perturbated by SAMTOR in a SAM-sensitive manner. Interacts with GFI1; promoting recognition and binding of MRE11 and TP53BP1 substrates by PRMT1. Polyubiquitinated at Lys-145 by the SCF(FBXL17) complex, leading to its subsequent degradation. Ubiquitination is regulated by acetylation at Lys-228 and Lys-233. Polyubiquitinated by E3 ubiquitin-protein ligase TRIM48, leading to suppression of MAP3K5/ASK1 methylation and subsequent MAP3K5 activation. Post-translationally, acetylation at Lys-228 and Lys-233 regulates ubiquitination by the SCF(FBXL17) complex. Acetylated at Lys-233 by p300/EP300. Deacetylated at Lys-228 and Lys-233 by SIRT1. Widely expressed. Expressed strongly in colorectal cancer cells (at protein level). Expressed strongly in colorectal cancer tissues compared to wild-type colon samples (at protein level). Expressed strongly in colorectal cancer tissues compared to wild-type colon samples.

Its subcellular location is the nucleus. The protein localises to the nucleoplasm. It localises to the cytoplasm. The protein resides in the cytosol. It is found in the lysosome membrane. It catalyses the reaction L-arginyl-[protein] + 2 S-adenosyl-L-methionine = N(omega),N(omega)-dimethyl-L-arginyl-[protein] + 2 S-adenosyl-L-homocysteine + 2 H(+). It carries out the reaction L-arginyl-[protein] + S-adenosyl-L-methionine = N(omega)-methyl-L-arginyl-[protein] + S-adenosyl-L-homocysteine + H(+). The enzyme catalyses N(omega)-methyl-L-arginyl-[protein] + S-adenosyl-L-methionine = N(omega),N(omega)-dimethyl-L-arginyl-[protein] + S-adenosyl-L-homocysteine + H(+). Functionally, arginine methyltransferase that methylates (mono and asymmetric dimethylation) the guanidino nitrogens of arginyl residues present in proteins such as ESR1, histone H2, H3 and H4, FMR1, ILF3, HNRNPA1, HNRNPD, NFATC2IP, SUPT5H, TAF15, EWS, HABP4, SERBP1, RBM15, FOXO1, CHTOP, MAP3K5/ASK1, MICU1 and NPRL2. Constitutes the main enzyme that mediates monomethylation and asymmetric dimethylation of histone H4 'Arg-3' (H4R3me1 and H4R3me2a, respectively), a specific tag for epigenetic transcriptional activation. May be involved in the regulation of TAF15 transcriptional activity, act as an activator of estrogen receptor (ER)-mediated transactivation, play a key role in neurite outgrowth and act as a negative regulator of megakaryocytic differentiation, by modulating p38 MAPK pathway. Methylates RBM15, promoting ubiquitination and degradation of RBM15. Methylates MRE11 and TP53BP1, promoting the DNA damage response. Methylates FOXO1 and retains it in the nucleus increasing its transcriptional activity. Methylates CHTOP and this methylation is critical for its 5-hydroxymethylcytosine (5hmC)-binding activity. Methylates MAP3K5/ASK1 at 'Arg-78' and 'Arg-80' which promotes association of MAP3K5 with thioredoxin and negatively regulates MAP3K5 association with TRAF2, inhibiting MAP3K5 stimulation and MAP3K5-induced activation of JNK. Methylates H4R3 in genes involved in glioblastomagenesis in a CHTOP- and/or TET1-dependent manner. Plays a role in regulating alternative splicing in the heart. Methylates NPRL2 at 'Arg-78' leading to inhibition of its GTPase activator activity and then the GATOR1 complex and consequently inducing timely mTORC1 activation under methionine-sufficient conditions. The chain is Protein arginine N-methyltransferase 1 from Homo sapiens (Human).